Consider the following 472-residue polypeptide: MDSDRCLTDEISLNTLSSTFASDNNLRRKENFLKSRYPSKFDLNVSMLTKSDDVGKTPFSIFDSPSNPGFSRSHQMCSDKNKSPFLFDKIRDEPVSVDPVKLIINNRNKRKINRQKSRLQGLYRSDANGLQPLNSENVKMKKSTALSLTSSPLNSWKTDFKTPPKANVVCISLVIEGDGCASLLYEDLNQISNSCPEVAPNRQNALFSDETLTTMFYSGVTEDEGSCNNLLQSSFGDDLDLGMQRSATWAPGYNYPSKFDSIPFASASPKIKAAFPFDPNVYALNTNDGPVTSTDNNCDQLNTRMQAWNNGFNYSNLNGDIQYPAVTPKFFQQEGRALNVSDCNFGNEEIAYGGIPMRVCHSDSTLCDARIAAKQALKGKRQYDTSTSKAELSTPPSKRRHIDDADLVFHSSPLLSRSRFICCYCTKPFLSISKLQEHESSCSHVERLFGFAPNRLYDDGDGFLGSSFCSDW.

The segment at 420-444 adopts a C2H2-type zinc-finger fold; the sequence is FICCYCTKPFLSISKLQEHESSCSH.

Its subcellular location is the nucleus. Functionally, transcriptional activator that controls the onset of premeiotic DNA synthesis by regulating res2 and some other factor(s) in a mei2 independent cascade. The chain is Transcriptional activator protein rec16 (rec16) from Schizosaccharomyces pombe (strain 972 / ATCC 24843) (Fission yeast).